The sequence spans 1191 residues: uncharacterized protein (1191 aa).

11 WD repeats span residues 558–588 (GHRDGVTSVAISSHKNLIASASRDGTVHLWT), 599–629 (GHTGSIYRVDFSPNGKIFATAGQDQTVKIWD), 640–670 (GHQDSVYSVSFSPDGEILASTSRDRTVRLWH), 682–712 (GHTKSVDDAQFSPDGQTLVSVCRDGQIRLWD), 723–753 (LPEVAFFGVNWHPNGNLLAVAADDGTVRLWT), 764–794 (GHDEFVTRVVFTPDGKQLFSSSSNGSVIHWS), 805–835 (GYPEAIFGLALASNGALLAIGAENNLVKVWD), 995–1025 (QRKEPIRSVSLHPTLPQLAAGDEQGNLTLWN), 1036–1066 (AHGDRLNQLQYSPNGKYLLSAGREGTAKIWS), 1077–1107 (SDPLPIDQIAISPDSQWIATAASDGMVRLWD), and 1118–1148 (STSGSLLGLDFNRQGQWLLAVAQNGDLQSWP).

This is an uncharacterized protein from Synechocystis sp. (strain ATCC 27184 / PCC 6803 / Kazusa).